Consider the following 1034-residue polypeptide: Protein ITPRID1 (1034 aa).

Disordered stretches follow at residues 223–290, 442–486, and 624–678; these read KTQQ…PTKP, QVSS…KSMT, and QSSL…SSWS. Polar residues-rich tracts occupy residues 443–453 and 465–476; these read VSSMTGSQSPT and HSPASQQDSLQE. The segment covering 477 to 486 has biased composition (low complexity); it reads SYGSKSKSMT. Residues 669-678 are compositionally biased toward polar residues; that stretch reads TDSNAASSWS. Positions 843–902 form a coiled coil; that stretch reads EMETMKMVCQSFREHLEEIEQHFMGQQALYPRDMSEEEREEAEYLRTLREALRQQVAELA.

This chain is Protein ITPRID1 (Itprid1), found in Mus musculus (Mouse).